We begin with the raw amino-acid sequence, 602 residues long: Elongation factor 4 (602 aa).

Residues 8-190 (DLIRNFSIVA…AIVHRLPPPK (183 aa)) enclose the tr-type G domain. Residues 20-25 (DHGKST) and 137-140 (NKID) contribute to the GTP site.

This sequence belongs to the TRAFAC class translation factor GTPase superfamily. Classic translation factor GTPase family. LepA subfamily.

The protein resides in the cell inner membrane. It carries out the reaction GTP + H2O = GDP + phosphate + H(+). Required for accurate and efficient protein synthesis under certain stress conditions. May act as a fidelity factor of the translation reaction, by catalyzing a one-codon backward translocation of tRNAs on improperly translocated ribosomes. Back-translocation proceeds from a post-translocation (POST) complex to a pre-translocation (PRE) complex, thus giving elongation factor G a second chance to translocate the tRNAs correctly. Binds to ribosomes in a GTP-dependent manner. This is Elongation factor 4 from Cereibacter sphaeroides (strain KD131 / KCTC 12085) (Rhodobacter sphaeroides).